The chain runs to 333 residues: Bifunctional phosphoglucose/phosphomannose isomerase (333 aa).

One can recognise an SIS domain in the interval leucine 22–alanine 160. Positions 39, 40, 84, 86, 89, and 136 each coordinate D-fructose 6-phosphate. Residue glutamate 211 is the Proton acceptor of the active site. Histidine 227 and lysine 322 together coordinate D-fructose 6-phosphate. Histidine 227 serves as the catalytic Proton donor. Lysine 322 functions as the Proton acceptor in the catalytic mechanism.

Belongs to the PGI/PMI family. As to quaternary structure, homodimer.

The catalysed reaction is alpha-D-glucose 6-phosphate = beta-D-fructose 6-phosphate. It carries out the reaction D-mannose 6-phosphate = D-fructose 6-phosphate. With respect to regulation, inhibited by low concentrations of erythrose 4-phosphate and 6-phosphogluconate. Dual specificity isomerase that catalyzes the isomerization of both glucose-6-phosphate and mannose-6-phosphate to fructose-6-phosphate with similar catalytic efficiency. The sequence is that of Bifunctional phosphoglucose/phosphomannose isomerase from Aeropyrum pernix (strain ATCC 700893 / DSM 11879 / JCM 9820 / NBRC 100138 / K1).